The sequence spans 210 residues: RNA binding protein, mRNA processing factor 2 (210 aa).

Residues 1 to 10 (MSNLKPDVEH) show a composition bias toward basic and acidic residues. Residues 1 to 25 (MSNLKPDVEHCTGAGTGTGTGPSGP) are disordered. At Ser-2 the chain carries N-acetylserine. Positions 31–108 (RTLFVSGLPV…QTLRLEFAKA (78 aa)) constitute an RRM domain. The interval 41-51 (DIKPRELYLLF) is important for homodimerization.

As to quaternary structure, homodimer. Interacts with EEF2.

The protein localises to the cytoplasm. The protein resides in the nucleus. Its subcellular location is the stress granule. Its function is as follows. RNA-binding protein involved in the regulation of smooth muscle cell differentiation and proliferation in the gastrointestinal system. Binds NOG mRNA, the major inhibitor of the bone morphogenetic protein (BMP) pathway. Mediates an increase of NOG mRNA levels, thereby contributing to the negative regulation of BMP signaling pathway and promoting reversible dedifferentiation and proliferation of smooth muscle cells. Acts as a pre-mRNA alternative splicing regulator. Mediates ACTN1 and FLNB alternative splicing. Likely binds to mRNA tandem CAC trinucleotide or CA dinucleotide motifs. This Rattus norvegicus (Rat) protein is RNA binding protein, mRNA processing factor 2 (Rbpms2).